Here is an 86-residue protein sequence, read N- to C-terminus: Sodium channel neurotoxin MeuNaTxalpha-5 (86 aa).

An N-terminal signal peptide occupies residues 1–19 (MNYLILISFALLVITGVES). In terms of domain architecture, LCN-type CS-alpha/beta spans 21–85 (RDAYIAKPHN…VPIRIPGKCH (65 aa)). 4 disulfide bridges follow: C31–C84, C35–C57, C43–C67, and C47–C69. R86 is a propeptide (removed by a carboxypeptidase).

This sequence belongs to the long (4 C-C) scorpion toxin superfamily. Sodium channel inhibitor family. Alpha subfamily. Expressed by the venom gland.

It is found in the secreted. Alpha toxins bind voltage-independently at site-3 of sodium channels (Nav) and inhibit the inactivation of the activated channels, thereby blocking neuronal transmission. This toxin inhibits inactivation of Nav1.6/SCN8A (EC(50)=790 nM) and drosophila DmNav1 (EC(50)=280 nM). The toxin (1 uM) does not significantly shift the midpoint of activation at the two channels, but induces a significant depolarizing shift in the V(1/2) of inactivation of the channels. Has antimicrobial activity. The chain is Sodium channel neurotoxin MeuNaTxalpha-5 from Mesobuthus eupeus (Lesser Asian scorpion).